Consider the following 342-residue polypeptide: Deoxyguanosinetriphosphate triphosphohydrolase-like protein (342 aa).

Positions 75-190 (RLVHTLEVSQ…VRFADKIAYV (116 aa)) constitute an HD domain.

This sequence belongs to the dGTPase family. Type 2 subfamily.

The chain is Deoxyguanosinetriphosphate triphosphohydrolase-like protein from Clostridium perfringens (strain 13 / Type A).